Reading from the N-terminus, the 302-residue chain is Bifunctional protein FolD (302 aa).

NADP(+) contacts are provided by residues 165–167 (GRS), serine 190, and isoleucine 231.

This sequence belongs to the tetrahydrofolate dehydrogenase/cyclohydrolase family. Homodimer.

The catalysed reaction is (6R)-5,10-methylene-5,6,7,8-tetrahydrofolate + NADP(+) = (6R)-5,10-methenyltetrahydrofolate + NADPH. The enzyme catalyses (6R)-5,10-methenyltetrahydrofolate + H2O = (6R)-10-formyltetrahydrofolate + H(+). Its pathway is one-carbon metabolism; tetrahydrofolate interconversion. Its function is as follows. Catalyzes the oxidation of 5,10-methylenetetrahydrofolate to 5,10-methenyltetrahydrofolate and then the hydrolysis of 5,10-methenyltetrahydrofolate to 10-formyltetrahydrofolate. This Prochlorococcus marinus (strain MIT 9303) protein is Bifunctional protein FolD.